We begin with the raw amino-acid sequence, 159 residues long: Calcium-binding protein CML39 (159 aa).

EF-hand domains lie at 18–53 (EKNR…LGEQ), 54–89 (MSDE…NDEF), 93–128 (EKKR…LGES), and 129–159 (RTTD…LMMR). D31, N33, D35, R37, E42, D67, D69, D71, M73, and E78 together coordinate Ca(2+). D142, N144, D146, and E153 together coordinate Ca(2+).

As to expression, expressed in the zones of elongation and differentiation in seedling roots and at the root-hypocotyl junction. Expressed from stage 12 of flower development in anthers, specifically in pollen.

Functionally, potential calcium sensor that binds calcium in vitro. This chain is Calcium-binding protein CML39 (CML39), found in Arabidopsis thaliana (Mouse-ear cress).